The chain runs to 341 residues: Uroporphyrinogen decarboxylase (341 aa).

Residues 26–30 (RQAGR), D75, Y150, S205, and H318 contribute to the substrate site.

The protein belongs to the uroporphyrinogen decarboxylase family. Homodimer.

The protein resides in the cytoplasm. The enzyme catalyses uroporphyrinogen III + 4 H(+) = coproporphyrinogen III + 4 CO2. It functions in the pathway porphyrin-containing compound metabolism; protoporphyrin-IX biosynthesis; coproporphyrinogen-III from 5-aminolevulinate: step 4/4. Functionally, catalyzes the decarboxylation of four acetate groups of uroporphyrinogen-III to yield coproporphyrinogen-III. The protein is Uroporphyrinogen decarboxylase of Thermus thermophilus (strain ATCC 27634 / DSM 579 / HB8).